A 207-amino-acid polypeptide reads, in one-letter code: Large ribosomal subunit protein uL3 (207 aa).

A disordered region spans residues 129-152; it reads AGGPAGHGSRFQRHPGSIGSNTTP.

The protein belongs to the universal ribosomal protein uL3 family. Part of the 50S ribosomal subunit. Forms a cluster with proteins L14 and L19.

In terms of biological role, one of the primary rRNA binding proteins, it binds directly near the 3'-end of the 23S rRNA, where it nucleates assembly of the 50S subunit. In Leptospira biflexa serovar Patoc (strain Patoc 1 / ATCC 23582 / Paris), this protein is Large ribosomal subunit protein uL3.